We begin with the raw amino-acid sequence, 583 residues long: Proteasome-associated ATPase (583 aa).

A compositionally biased stretch (polar residues) spans 1–19 (METPNQDSGRTPTEQSAAN). The segment at 1-22 (METPNQDSGRTPTEQSAANDLS) is disordered. Positions 24 to 75 (ADRQVNILRDKLRHIDRQLAAATQNNTKLVSMLETAKAEILRLKNALDQEGQ) form a coiled coil. 271–276 (GCGKTL) contacts ATP. A docks into pockets in the proteasome alpha-ring region spans residues 582-583 (YL).

It belongs to the AAA ATPase family. As to quaternary structure, homohexamer. Assembles into a hexameric ring structure that caps the 20S proteasome core. Strongly interacts with the prokaryotic ubiquitin-like protein Pup through a hydrophobic interface; the interacting region of ARC lies in its N-terminal coiled-coil domain. There is one Pup binding site per ARC hexamer ring. Upon ATP-binding, the C-terminus of ARC interacts with the alpha-rings of the proteasome core, possibly by binding to the intersubunit pockets.

Its pathway is protein degradation; proteasomal Pup-dependent pathway. ATPase which is responsible for recognizing, binding, unfolding and translocation of pupylated proteins into the bacterial 20S proteasome core particle. May be essential for opening the gate of the 20S proteasome via an interaction with its C-terminus, thereby allowing substrate entry and access to the site of proteolysis. Thus, the C-termini of the proteasomal ATPase may function like a 'key in a lock' to induce gate opening and therefore regulate proteolysis. The sequence is that of Proteasome-associated ATPase from Pseudarthrobacter chlorophenolicus (strain ATCC 700700 / DSM 12829 / CIP 107037 / JCM 12360 / KCTC 9906 / NCIMB 13794 / A6) (Arthrobacter chlorophenolicus).